We begin with the raw amino-acid sequence, 884 residues long: Alanine--tRNA ligase (884 aa).

Zn(2+)-binding residues include H565, H569, C675, and H679.

It belongs to the class-II aminoacyl-tRNA synthetase family. Requires Zn(2+) as cofactor.

It is found in the cytoplasm. It catalyses the reaction tRNA(Ala) + L-alanine + ATP = L-alanyl-tRNA(Ala) + AMP + diphosphate. In terms of biological role, catalyzes the attachment of alanine to tRNA(Ala) in a two-step reaction: alanine is first activated by ATP to form Ala-AMP and then transferred to the acceptor end of tRNA(Ala). Also edits incorrectly charged Ser-tRNA(Ala) and Gly-tRNA(Ala) via its editing domain. This chain is Alanine--tRNA ligase, found in Maricaulis maris (strain MCS10) (Caulobacter maris).